We begin with the raw amino-acid sequence, 577 residues long: NKAP family protein UM04995 (577 aa).

The tract at residues 1-479 (MPTLAERLGS…YGGALLPGEG (479 aa)) is disordered. A compositionally biased stretch (basic and acidic residues) spans 20–31 (KSSHDREQELRS). The segment covering 36 to 49 (SKQTSRNTAHQDLA) has biased composition (polar residues). Over residues 50 to 60 (SSERRSIDREL) the composition is skewed to basic and acidic residues. Low complexity predominate over residues 70–89 (SPLSSPQNGSSPRRQRGSPS). Composition is skewed to basic and acidic residues over residues 127–163 (PRED…DSRR), 170–193 (SGDR…REAP), and 265–297 (DSSS…DKHH). 2 stretches are compositionally biased toward basic residues: residues 298–316 (SSSR…RRSS) and 325–336 (SRHRHTRSSRSH). A compositionally biased stretch (acidic residues) spans 340–350 (DDDDDDDEDVD). Residues 363–385 (KVSDGSDSGRSESETDSDSDARS) show a composition bias toward basic and acidic residues. Over residues 386-395 (SRHRRRHHKS) the composition is skewed to basic residues. Basic and acidic residues-rich tracts occupy residues 396–408 (DRSS…ESEK) and 417–439 (SESE…RRDS). The stretch at 529 to 570 (RKENQVISAEEKRTMLRLQAEEKAKKEREIVSQFKELVDTLQ) forms a coiled coil.

It belongs to the NKAP family.

The sequence is that of NKAP family protein UM04995 from Mycosarcoma maydis (Corn smut fungus).